The sequence spans 338 residues: Lipoate-protein ligase A (338 aa).

The BPL/LPL catalytic domain maps to 29–216; sequence PATQRVLFLW…AFFAHYGERV (188 aa). Residues R71, 76–79, and K134 each bind ATP; that span reads GAVF. K134 provides a ligand contact to (R)-lipoate.

This sequence belongs to the LplA family. Monomer.

It localises to the cytoplasm. The catalysed reaction is L-lysyl-[lipoyl-carrier protein] + (R)-lipoate + ATP = N(6)-[(R)-lipoyl]-L-lysyl-[lipoyl-carrier protein] + AMP + diphosphate + H(+). It participates in protein modification; protein lipoylation via exogenous pathway; protein N(6)-(lipoyl)lysine from lipoate: step 1/2. The protein operates within protein modification; protein lipoylation via exogenous pathway; protein N(6)-(lipoyl)lysine from lipoate: step 2/2. Catalyzes both the ATP-dependent activation of exogenously supplied lipoate to lipoyl-AMP and the transfer of the activated lipoyl onto the lipoyl domains of lipoate-dependent enzymes. The protein is Lipoate-protein ligase A of Escherichia coli O6:K15:H31 (strain 536 / UPEC).